The following is a 257-amino-acid chain: Snake venom serine protease nikobin (257 aa).

The signal sequence occupies residues 1–18 (MVLIRVLANLLLLQLSYA). Residues 19-24 (QKSSEL) constitute a propeptide that is removed on maturation. A Peptidase S1 domain is found at 25 to 248 (VIGGDECNIN…YSDWIQSIIA (224 aa)). Cystine bridges form between Cys-31–Cys-162, Cys-49–Cys-65, Cys-97–Cys-255, Cys-141–Cys-209, Cys-173–Cys-188, and Cys-199–Cys-224. Catalysis depends on charge relay system residues His-64 and Asp-109. Asn-120 and Asn-121 each carry an N-linked (GlcNAc...) asparagine glycan. The active-site Charge relay system is the Ser-203. An N-linked (GlcNAc...) asparagine glycan is attached at Asn-250.

Belongs to the peptidase S1 family. Snake venom subfamily. As to quaternary structure, monomer. Expressed by the venom gland.

It localises to the secreted. Functionally, snake venom serine protease that may act in the hemostasis system of the prey. The polypeptide is Snake venom serine protease nikobin (sp-VN) (Vipera nikolskii (Nikolsky's adder)).